The sequence spans 480 residues: Aspartyl/glutamyl-tRNA(Asn/Gln) amidotransferase subunit B (480 aa).

It belongs to the GatB/GatE family. GatB subfamily. As to quaternary structure, heterotrimer of A, B and C subunits.

It carries out the reaction L-glutamyl-tRNA(Gln) + L-glutamine + ATP + H2O = L-glutaminyl-tRNA(Gln) + L-glutamate + ADP + phosphate + H(+). The catalysed reaction is L-aspartyl-tRNA(Asn) + L-glutamine + ATP + H2O = L-asparaginyl-tRNA(Asn) + L-glutamate + ADP + phosphate + 2 H(+). In terms of biological role, allows the formation of correctly charged Asn-tRNA(Asn) or Gln-tRNA(Gln) through the transamidation of misacylated Asp-tRNA(Asn) or Glu-tRNA(Gln) in organisms which lack either or both of asparaginyl-tRNA or glutaminyl-tRNA synthetases. The reaction takes place in the presence of glutamine and ATP through an activated phospho-Asp-tRNA(Asn) or phospho-Glu-tRNA(Gln). This Streptococcus thermophilus (strain ATCC BAA-491 / LMD-9) protein is Aspartyl/glutamyl-tRNA(Asn/Gln) amidotransferase subunit B.